We begin with the raw amino-acid sequence, 2171 residues long: DExH-box ATP-dependent RNA helicase DExH12 (2171 aa).

Disordered regions lie at residues 24–80 (SLVL…KERD), 218–267 (EENE…NEGT), and 383–426 (TAKE…ESGW). 2 stretches are compositionally biased toward basic and acidic residues: residues 31 to 40 (NRPRDTHEPT) and 50 to 80 (IDPR…KERD). Residues 218–242 (EENEEDDEESDPDMVEEDDDEEDDE) are compositionally biased toward acidic residues. Residues 383–423 (TAKEREENLQKSINEEARRLKDETGGDGGRGRRDVADRDSE) are compositionally biased toward basic and acidic residues. Positions 514 to 697 (DTALFKAENI…FLRVDLKKGL (184 aa)) constitute a Helicase ATP-binding 1 domain. ATP is bound at residue 527 to 534 (APTGAGKT). The DEIH box signature appears at 639–642 (DEIH). The 211-residue stretch at 731–941 (LCYQKVLAGA…GTVQNAREAC (211 aa)) folds into the Helicase C-terminal 1 domain. Residues 1006–1308 (TDLGRIASYY…WLGSETVLPV (303 aa)) enclose the SEC63 1 domain. A Helicase ATP-binding 2 domain is found at 1360-1537 (TVLYNTNDNV…WIGASSHGLF (178 aa)). 1373–1380 (APTGSGKT) serves as a coordination point for ATP. Positions 1479–1482 (DELH) match the DELH box motif. In terms of domain architecture, Helicase C-terminal 2 spans 1574–1779 (AIVQHAKNKK…GVIENKQDAV (206 aa)). The SEC63 2 domain occupies 1839–2157 (PLNLGMIASY…LGCDQEYSFS (319 aa)).

The protein belongs to the DExH box helicase family. In terms of assembly, interacts with CLO.

Its subcellular location is the nucleus. The enzyme catalyses ATP + H2O = ADP + phosphate + H(+). Its function is as follows. RNA helicase that plays an essential role in pre-mRNA splicing as component of the U5 snRNP and U4/U6-U5 tri-snRNP complexes. Involved in spliceosome assembly, activation and disassembly. This Arabidopsis thaliana (Mouse-ear cress) protein is DExH-box ATP-dependent RNA helicase DExH12.